The sequence spans 189 residues: Isopentenyl-diphosphate Delta-isomerase (189 aa).

Residues His27 and His34 each contribute to the Mn(2+) site. In terms of domain architecture, Nudix hydrolase spans 32–171; it reads PLHFAFSTYI…PFVFSPWLVD (140 aa). Cys69 is a catalytic residue. Residue Cys69 participates in Mg(2+) binding. Mn(2+) is bound at residue His71. Residue Glu89 participates in Mg(2+) binding. Glu119 and Glu121 together coordinate Mn(2+). Glu121 is a catalytic residue.

The protein belongs to the IPP isomerase type 1 family. The cofactor is Mg(2+). Requires Mn(2+) as cofactor.

It is found in the cytoplasm. The enzyme catalyses isopentenyl diphosphate = dimethylallyl diphosphate. Its pathway is isoprenoid biosynthesis; dimethylallyl diphosphate biosynthesis; dimethylallyl diphosphate from isopentenyl diphosphate: step 1/1. In terms of biological role, catalyzes the 1,3-allylic rearrangement of the homoallylic substrate isopentenyl (IPP) to its highly electrophilic allylic isomer, dimethylallyl diphosphate (DMAPP). The protein is Isopentenyl-diphosphate Delta-isomerase of Corynebacterium glutamicum (strain ATCC 13032 / DSM 20300 / JCM 1318 / BCRC 11384 / CCUG 27702 / LMG 3730 / NBRC 12168 / NCIMB 10025 / NRRL B-2784 / 534).